The primary structure comprises 429 residues: Histidine--tRNA ligase (429 aa).

The protein belongs to the class-II aminoacyl-tRNA synthetase family. Homodimer.

The protein localises to the cytoplasm. It catalyses the reaction tRNA(His) + L-histidine + ATP = L-histidyl-tRNA(His) + AMP + diphosphate + H(+). The sequence is that of Histidine--tRNA ligase from Streptococcus pneumoniae (strain 70585).